Consider the following 150-residue polypeptide: Detocs response regulatory protein DtcB (150 aa).

In terms of domain architecture, Response regulatory spans 2–150 (KILIADDNIQ…TDLIKKITEL (149 aa)). Residue Asp54 is modified to 4-aspartylphosphate.

Post-translationally, probably phosphorylated by DtcA.

In terms of biological role, possible phosphate scavenger member of the two-component regulatory system Detocs that confers resistance to bacteriophage. When the system (DtcA-DtcB-DtcC) is expressed in a susceptible E.coli (strain MG1655) it confers resistance to bacteriophages T2, T4, T5, T7, SECphi4, SECphi6 and SECphi27; the level of resistance varies, resistance to T2, T7 and SECphi4 is not very high. DtcA probably autophosphorylates upon sensing viral infection, and subsequently transfers the phosphate signal to DtcC which activates it, leading to an antiviral defense; DtcB (this subunit) may scavenge phosphorylation signals from accidental activation of DtcA. The chain is Detocs response regulatory protein DtcB from Enterobacter cloacae (strain JD6301).